The following is a 300-amino-acid chain: Hydroxyquinol 1,2-dioxygenase (300 aa).

Fe cation contacts are provided by Y167, Y200, H224, and H226.

It belongs to the intradiol ring-cleavage dioxygenase family. It depends on Fe(3+) as a cofactor.

The catalysed reaction is benzene-1,2,4-triol + O2 = maleylacetate + 2 H(+). It participates in aromatic compound metabolism. Its pathway is xenobiotic degradation. Its function is as follows. Involved in the degradation of para-nitrophenol (4-NP). Catalyzes the conversion of hydroxyquinol to malelylacetate. This Rhodococcus opacus (Nocardia opaca) protein is Hydroxyquinol 1,2-dioxygenase (npcC).